The chain runs to 1019 residues: Limulus clotting factor C (1019 aa).

The N-terminal stretch at Met1–Ser25 is a signal peptide. An EGF-like domain is found at Tyr102 to Glu137. 17 disulfide bridges follow: Cys106–Cys118, Cys112–Cys125, Cys127–Cys136, Cys142–Cys182, Cys168–Cys195, Cys199–Cys241, Cys227–Cys254, Cys260–Cys308, Cys294–Cys321, Cys331–Cys350, Cys354–Cys374, Cys436–Cys447, Cys464–Cys564, Cys538–Cys556, Cys576–Cys621, Cys607–Cys634, and Cys720–Cys748. Sushi domains follow at residues Lys140–Arg197, Glu198–Asn256, and Val258–Lys323. In terms of domain architecture, LCCL spans Ala325 to Phe421. Residues Cys436–Leu568 form the C-type lectin domain. Asn523 and Asn534 each carry an N-linked (GlcNAc...) asparagine glycan. Sushi domains are found at residues Ala574–Lys636 and Pro689–Pro750. Asn624, Asn740, and Asn767 each carry an N-linked (GlcNAc...) asparagine glycan. Residues Ile763–Ile1019 form the Peptidase S1 domain. Cysteines 794 and 810 form a disulfide. Catalysis depends on charge relay system residues His809 and Asp865. N-linked (GlcNAc...) asparagine glycosylation is present at Asn912. Residues Cys932 and Cys951 are joined by a disulfide bond. Asp960 is a binding site for substrate. A disulfide bridge connects residues Cys962 and Cys996. Catalysis depends on Ser966, which acts as the Charge relay system.

The protein belongs to the peptidase S1 family. As to quaternary structure, heterodimer of a light chain and a heavy chain linked by a disulfide bond.

The protein resides in the secreted. The catalysed reaction is Selective cleavage of 103-Arg-|-Ser-104 and 124-Ile-|-Ile-125 bonds in Limulus clotting factor B to form activated factor B. Cleavage of -Pro-Arg-|-Xaa- bonds in synthetic substrates.. With respect to regulation, activated by Gram-negative bacterial lipopolysaccharides and chymotrypsin. Its function is as follows. This enzyme is closely associated with an endotoxin-sensitive hemolymph coagulation system which may play important roles in both hemostasis and host defense mechanisms. Its active form catalyzes the activation of factor B. In Carcinoscorpius rotundicauda (Mangrove horseshoe crab), this protein is Limulus clotting factor C.